A 608-amino-acid chain; its full sequence is Protein trichome birefringence (608 aa).

Residues 38–58 traverse the membrane as a helical; Signal-anchor for type II membrane protein segment; that stretch reads TFAYAFVITFVSFTLFFAFSP. Composition is skewed to polar residues over residues 101-137 and 145-203; these read STKP…QTPA and AKNT…TSPA. The disordered stretch occupies residues 101–236; it reads STKPTNRSSD…TPKKQTKTVD (136 aa). Residues 215–227 show a composition bias toward low complexity; that stretch reads TNSSSNSSTASST. Positions 328–330 match the GDS motif motif; it reads GDS. Residues 573–587 carry the DCXHWCLPGXXDXWN motif motif; it reads DCSHWCLPGVPDSWN.

It belongs to the PC-esterase family. TBL subfamily. As to expression, expressed in leaf vasculature, growing part of the root, expanding inflorescence stems and trichomes.

Its subcellular location is the membrane. Required during cellulose deposition. May act as a bridging protein that binds pectin and other cell wall polysaccharides. Probably involved in maintaining esterification of pectins. May be involved in the specific O-acetylation of cell wall polymers. The chain is Protein trichome birefringence (TBR) from Arabidopsis thaliana (Mouse-ear cress).